Consider the following 233-residue polypeptide: MQNFQPRHFAIVPAAGSGSRMATSRPKQYLPLLGKPLIFHSLAVLCAAPDVDKVFVVLSVEDAEWRRHDWSVLGPKLVPLFCGGGTRADSVLAGLRAVADEIEPSDWVLVHDAARPCLAPWHIEKLARELARDEVGGLLAVPVADTLKRADEHRQVLATVPRENLWQAQTPQMFRHVMLRRALEAATNATDEASAIEAAGLHPRLVESDATNLKVTYPLDLHLAEWILTNRGS.

Belongs to the IspD/TarI cytidylyltransferase family. IspD subfamily.

The catalysed reaction is 2-C-methyl-D-erythritol 4-phosphate + CTP + H(+) = 4-CDP-2-C-methyl-D-erythritol + diphosphate. Its pathway is isoprenoid biosynthesis; isopentenyl diphosphate biosynthesis via DXP pathway; isopentenyl diphosphate from 1-deoxy-D-xylulose 5-phosphate: step 2/6. Catalyzes the formation of 4-diphosphocytidyl-2-C-methyl-D-erythritol from CTP and 2-C-methyl-D-erythritol 4-phosphate (MEP). The protein is 2-C-methyl-D-erythritol 4-phosphate cytidylyltransferase of Aromatoleum aromaticum (strain DSM 19018 / LMG 30748 / EbN1) (Azoarcus sp. (strain EbN1)).